Consider the following 267-residue polypeptide: MEMO1 family protein MM_1761 (267 aa).

The protein belongs to the MEMO1 family.

This chain is MEMO1 family protein MM_1761, found in Methanosarcina mazei (strain ATCC BAA-159 / DSM 3647 / Goe1 / Go1 / JCM 11833 / OCM 88) (Methanosarcina frisia).